Here is a 417-residue protein sequence, read N- to C-terminus: Transmembrane protease serine 11G (417 aa).

Topologically, residues 1 to 21 (MYQPGILVRRKRVWKPWTVAL) are cytoplasmic. A helical; Signal-anchor for type II membrane protein transmembrane segment spans residues 22–42 (ITVALLLALAVLIGLLVYFLV). Residues 43 to 417 (YDEKTHYYQA…RDWIKSKTSI (375 aa)) are Extracellular-facing. The SEA domain occupies 46–165 (KTHYYQASFW…PYLREMNAAQ (120 aa)). Asn60 carries N-linked (GlcNAc...) asparagine glycosylation. Residues 186–416 (IADGKPADKA…YRDWIKSKTS (231 aa)) form the Peptidase S1 domain. Cysteines 211 and 227 form a disulfide. Catalysis depends on charge relay system residues His226 and Asp271. Cystine bridges form between Cys336–Cys352 and Cys363–Cys392. Ser367 functions as the Charge relay system in the catalytic mechanism.

This sequence belongs to the peptidase S1 family.

It is found in the membrane. This chain is Transmembrane protease serine 11G (Tmprss11g), found in Mus musculus (Mouse).